The primary structure comprises 422 residues: Histidine--tRNA ligase (422 aa).

The protein belongs to the class-II aminoacyl-tRNA synthetase family. In terms of assembly, homodimer.

It is found in the cytoplasm. The enzyme catalyses tRNA(His) + L-histidine + ATP = L-histidyl-tRNA(His) + AMP + diphosphate + H(+). The chain is Histidine--tRNA ligase from Ruthia magnifica subsp. Calyptogena magnifica.